Here is a 155-residue protein sequence, read N- to C-terminus: Endoribonuclease YbeY (155 aa).

Residues H114, H118, and H124 each contribute to the Zn(2+) site.

Belongs to the endoribonuclease YbeY family. Zn(2+) serves as cofactor.

Its subcellular location is the cytoplasm. In terms of biological role, single strand-specific metallo-endoribonuclease involved in late-stage 70S ribosome quality control and in maturation of the 3' terminus of the 16S rRNA. This chain is Endoribonuclease YbeY, found in Escherichia coli O17:K52:H18 (strain UMN026 / ExPEC).